The sequence spans 83 residues: Consomatin Rs1 (83 aa).

The N-terminal stretch at 1 to 22 (MQTAYWVMVMMMVWITAPLSEG) is a signal peptide. Positions 23-55 (GKLNNVIRGLVPDDVTPKRISQSLISRRRFDSR) are excised as a propeptide. Cysteines 62 and 67 form a disulfide. Trp64 bears the D-tryptophan mark. The residue at position 68 (Pro68) is a 4-hydroxyproline. Positions 71 to 83 (LHGDNYDLKEKDK) are excised as a propeptide.

Belongs to the conotoxin C superfamily. Consomatin family. Expressed by the venom duct.

The protein localises to the secreted. In terms of biological role, moderately activates human somatostatin receptors (SSTR) with a preferential activation of SSTR1 and SSTR4. In vivo, does not cause behavioral changes in mice within a few minutes of intracranial injection, but causes a progressive loss of movement thereafter. Four to five hours after injection, mice recover, even with the highest dose tested. Shows antinociception and antihyperalgesia activities in two mouse models of acute pain, most probably by acting outside the central nervous system. The sequence is that of Consomatin Rs1 from Conus raulsilvai (Sea snail).